We begin with the raw amino-acid sequence, 119 residues long: MIHGIGVDLIEIDRIQALYSKQPKLVERILTKNEQHKFNNFTHEQRKIEFLAGRFATKEAFSKALGTGLGKHVAFNDIDCYNDELGKPKIDYEGFIVHVSISHTEHYAMSQVVLEKSAF.

Mg(2+) contacts are provided by D8 and E59.

Belongs to the P-Pant transferase superfamily. AcpS family. It depends on Mg(2+) as a cofactor.

It localises to the cytoplasm. It catalyses the reaction apo-[ACP] + CoA = holo-[ACP] + adenosine 3',5'-bisphosphate + H(+). Transfers the 4'-phosphopantetheine moiety from coenzyme A to a Ser of acyl-carrier-protein. The polypeptide is Holo-[acyl-carrier-protein] synthase (Staphylococcus aureus (strain USA300)).